A 185-amino-acid polypeptide reads, in one-letter code: Ribosome-recycling factor (185 aa).

This sequence belongs to the RRF family.

Its subcellular location is the cytoplasm. Functionally, responsible for the release of ribosomes from messenger RNA at the termination of protein biosynthesis. May increase the efficiency of translation by recycling ribosomes from one round of translation to another. This Halorhodospira halophila (strain DSM 244 / SL1) (Ectothiorhodospira halophila (strain DSM 244 / SL1)) protein is Ribosome-recycling factor.